The following is a 548-amino-acid chain: Chaperonin GroEL (548 aa).

Residues 29-32, lysine 50, 86-90, glycine 414, 478-480, and aspartate 494 contribute to the ATP site; these read TLGP, DGTTT, and NAA.

This sequence belongs to the chaperonin (HSP60) family. In terms of assembly, forms a cylinder of 14 subunits composed of two heptameric rings stacked back-to-back. Interacts with the co-chaperonin GroES.

It localises to the cytoplasm. It carries out the reaction ATP + H2O + a folded polypeptide = ADP + phosphate + an unfolded polypeptide.. Its function is as follows. Together with its co-chaperonin GroES, plays an essential role in assisting protein folding. The GroEL-GroES system forms a nano-cage that allows encapsulation of the non-native substrate proteins and provides a physical environment optimized to promote and accelerate protein folding. The sequence is that of Chaperonin GroEL from Alcanivorax borkumensis (strain ATCC 700651 / DSM 11573 / NCIMB 13689 / SK2).